We begin with the raw amino-acid sequence, 180 residues long: Cytidylate kinase (180 aa).

Residue 7–15 coordinates ATP; the sequence is GPPGSGKST.

It belongs to the cytidylate kinase family. Type 2 subfamily.

The protein resides in the cytoplasm. It catalyses the reaction CMP + ATP = CDP + ADP. It carries out the reaction dCMP + ATP = dCDP + ADP. This chain is Cytidylate kinase, found in Sulfurisphaera tokodaii (strain DSM 16993 / JCM 10545 / NBRC 100140 / 7) (Sulfolobus tokodaii).